Reading from the N-terminus, the 251-residue chain is Pyrroloquinoline-quinone synthase (251 aa).

Belongs to the PqqC family.

It carries out the reaction 6-(2-amino-2-carboxyethyl)-7,8-dioxo-1,2,3,4,7,8-hexahydroquinoline-2,4-dicarboxylate + 3 O2 = pyrroloquinoline quinone + 2 H2O2 + 2 H2O + H(+). The protein operates within cofactor biosynthesis; pyrroloquinoline quinone biosynthesis. Its function is as follows. Ring cyclization and eight-electron oxidation of 3a-(2-amino-2-carboxyethyl)-4,5-dioxo-4,5,6,7,8,9-hexahydroquinoline-7,9-dicarboxylic-acid to PQQ. This is Pyrroloquinoline-quinone synthase from Pseudomonas savastanoi pv. phaseolicola (strain 1448A / Race 6) (Pseudomonas syringae pv. phaseolicola (strain 1448A / Race 6)).